A 416-amino-acid chain; its full sequence is Probable pectate lyase 8 (416 aa).

Residues 1–24 form the signal peptide; sequence MAVTKLILFASALLLTALFIGVNA. N23, N28, and N52 each carry an N-linked (GlcNAc...) asparagine glycan. Residues D214, D238, and D242 each coordinate Ca(2+). R294 is a catalytic residue.

The protein belongs to the polysaccharide lyase 1 family. The cofactor is Ca(2+).

The enzyme catalyses Eliminative cleavage of (1-&gt;4)-alpha-D-galacturonan to give oligosaccharides with 4-deoxy-alpha-D-galact-4-enuronosyl groups at their non-reducing ends.. Its pathway is glycan metabolism; pectin degradation; 2-dehydro-3-deoxy-D-gluconate from pectin: step 2/5. In Arabidopsis thaliana (Mouse-ear cress), this protein is Probable pectate lyase 8.